We begin with the raw amino-acid sequence, 181 residues long: Segregation and condensation protein B (181 aa).

This sequence belongs to the ScpB family. As to quaternary structure, homodimer. Homodimerization may be required to stabilize the binding of ScpA to the Smc head domains. Component of a cohesin-like complex composed of ScpA, ScpB and the Smc homodimer, in which ScpA and ScpB bind to the head domain of Smc. The presence of the three proteins is required for the association of the complex with DNA.

Its subcellular location is the cytoplasm. In terms of biological role, participates in chromosomal partition during cell division. May act via the formation of a condensin-like complex containing Smc and ScpA that pull DNA away from mid-cell into both cell halves. The sequence is that of Segregation and condensation protein B from Desulforamulus reducens (strain ATCC BAA-1160 / DSM 100696 / MI-1) (Desulfotomaculum reducens).